We begin with the raw amino-acid sequence, 305 residues long: Epoxyqueuosine reductase (305 aa).

The Proton donor role is filled by D128. Residues 170–202 form the 4Fe-4S ferredoxin-type domain; it reads LSLTSDTPHAKYCGTCRKCLDICPTKAIVHPFV. [4Fe-4S] cluster-binding residues include C182, C185, C188, C192, C208, C236, C239, and C243.

Belongs to the QueG family. In terms of assembly, monomer. It depends on cob(II)alamin as a cofactor. Requires [4Fe-4S] cluster as cofactor.

The protein localises to the cytoplasm. The catalysed reaction is epoxyqueuosine(34) in tRNA + AH2 = queuosine(34) in tRNA + A + H2O. The protein operates within tRNA modification; tRNA-queuosine biosynthesis. Catalyzes the conversion of epoxyqueuosine (oQ) to queuosine (Q), which is a hypermodified base found in the wobble positions of tRNA(Asp), tRNA(Asn), tRNA(His) and tRNA(Tyr). In Atelocyanobacterium thalassa (isolate ALOHA), this protein is Epoxyqueuosine reductase.